We begin with the raw amino-acid sequence, 279 residues long: Protein COP1 SUPPRESSOR 2 (279 aa).

2 disordered regions span residues 1–29 (MPPKRNFRKRSFEEEEEDNDVNKAAISEE) and 57–79 (SSTAQSSIGKVKPVEKTETEGEK). Residues 68 to 79 (KPVEKTETEGEK) show a composition bias toward basic and acidic residues. Residues 86–183 (DTFAQETAVL…EETEAAKKLL (98 aa)) are a coiled coil. A compositionally biased stretch (basic and acidic residues) spans 217-229 (LRREHPELYKDRG). The interval 217-279 (LRREHPELYK…KRERNRVMRR (63 aa)) is disordered. A compositionally biased stretch (polar residues) spans 250-260 (ADSGKSRQAAT). Residues 270–279 (KRERNRVMRR) are compositionally biased toward basic residues.

It belongs to the TLS1 family. Interacts with COP1.

The protein localises to the nucleus. It localises to the nucleus speckle. Inhibits E3 ubiquitin-protein ligase activity of COP1, a central repressor of seedling photomorphogenesis. Represses COP1-mediated turnover of HY5 in the dark. Required for primary root development under normal light growth conditions. The polypeptide is Protein COP1 SUPPRESSOR 2 (Arabidopsis thaliana (Mouse-ear cress)).